The primary structure comprises 703 residues: Protein STRUBBELIG-RECEPTOR FAMILY 8 (703 aa).

The N-terminal stretch at 1 to 27 (MAIGDRAMFTVLLLFIASISGFSVVRC) is a signal peptide. Residues 28–291 (VTDPSDVQAL…GKGLSGGVVT (264 aa)) are Extracellular-facing. 7 LRR repeats span residues 96–120 (LKSL…LPPN), 122–142 (TSLN…ISAM), 143–165 (GSLS…IFAD), 166–190 (HKSL…LSTV), 192–212 (TLSV…VLSG), 213–233 (LPLK…PKEL), and 234–256 (SSIQ…PQPE). 4 N-linked (GlcNAc...) asparagine glycosylation sites follow: asparagine 120, asparagine 130, asparagine 149, and asparagine 178. Asparagine 226 carries N-linked (GlcNAc...) asparagine glycosylation. Residues 247–284 (DNVPASPQPERPGKKETPSGSKKPKIGSEEKSSDSGKG) are disordered. The chain crosses the membrane as a helical span at residues 292-312 (GIVFGSLFVAGIIALVLYLCL). Residues 313 to 703 (HKKKRKVRGS…PEHEHVDISF (391 aa)) lie on the Cytoplasmic side of the membrane. The region spanning 395-672 (FSQENIIGEG…SEVVQQLVRL (278 aa)) is the Protein kinase domain. ATP is bound by residues 401–409 (IGEGSLGRV) and lysine 423.

It belongs to the protein kinase superfamily. Ser/Thr protein kinase family. In terms of tissue distribution, expressed in seedlings, roots, stems, leaves, flowers and siliques.

The protein resides in the membrane. The chain is Protein STRUBBELIG-RECEPTOR FAMILY 8 (SRF8) from Arabidopsis thaliana (Mouse-ear cress).